We begin with the raw amino-acid sequence, 1117 residues long: MEILWKTLTWILSLIMASSEFHSDHRLSYSSQEEFLTYLEHYQLTIPIRVDQNGAFLSFTVKNDKHSRRRRSMDPIDPQQAVSKLFFKLSAYGKHFHLNLTLNTDFVSKHFTVEYWGKDGPQWKHDFLDNCHYTGYLQDQRSTTKVALSNCVGLHGVIATEDEEYFIEPLKNTTEDSKHFSYENGHPHVIYKKSALQQRHLYDHSHCGVSDFTRSGKPWWLNDTSTVSYSLPINNTHIHHRQKRSVSIERFVETLVVADKMMVGYHGRKDIEHYILSVMNIVAKLYRDSSLGNVVNIIVARLIVLTEDQPNLEINHHADKSLDSFCKWQKSILSHQSDGNTIPENGIAHHDNAVLITRYDICTYKNKPCGTLGLASVAGMCEPERSCSINEDIGLGSAFTIAHEIGHNFGMNHDGIGNSCGTKGHEAAKLMAAHITANTNPFSWSACSRDYITSFLDSGRGTCLDNEPPKRDFLYPAVAPGQVYDADEQCRFQYGATSRQCKYGEVCRELWCLSKSNRCVTNSIPAAEGTLCQTGNIEKGWCYQGDCVPFGTWPQSIDGGWGPWSLWGECSRTCGGGVSSSLRHCDSPAPSGGGKYCLGERKRYRSCNTDPCPLGSRDFREKQCADFDNMPFRGKYYNWKPYTGGGVKPCALNCLAEGYNFYTERAPAVIDGTQCNADSLDICINGECKHVGCDNILGSDAREDRCRVCGGDGSTCDAIEGFFNDSLPRGGYMEVVQIPRGSVHIEVREVAMSKNYIALKSEGDDYYINGAWTIDWPRKFDVAGTAFHYKRPTDEPESLEALGPTSENLIVMVLLQEQNLGIRYKFNVPITRTGSGDNEVGFTWNHQPWSECSATCAGGVQRQEVVCKRLDDNSIVQNNYCDPDSKPPENQRACNTEPCPPEWFIGDWLECSKTCDGGMRTRAVLCIRKIGPSEEETLDYSGCLTHRPVEKEPCNNQSCPPQWVALDWSECTPKCGPGFKHRIVLCKSSDLSKTFPAAQCPEESKPPVRIRCSLGRCPPPRWVTGDWGQCSAQCGLGQQMRTVQCLSYTGQASSDCLETVRPPSMQQCESKCDSTPISNTEECKDVNKVAYCPLVLKFKFCSRAYFRQMCCKTCQGH.

The first 21 residues, 1-21, serve as a signal peptide directing secretion; it reads MEILWKTLTWILSLIMASSEF. Positions 22–244 are excised as a propeptide; it reads HSDHRLSYSS…NTHIHHRQKR (223 aa). N-linked (GlcNAc...) asparagine glycans are attached at residues Asn99, Asn172, Asn222, and Asn234. The 219-residue stretch at 250–468 folds into the Peptidase M12B domain; that stretch reads RFVETLVVAD…GRGTCLDNEP (219 aa). Intrachain disulfides connect Cys326-Cys387, Cys362-Cys369, Cys381-Cys463, Cys420-Cys447, Cys490-Cys512, Cys501-Cys519, Cys507-Cys542, Cys532-Cys547, Cys570-Cys607, Cys574-Cys612, and Cys585-Cys597. His403 provides a ligand contact to Zn(2+). Glu404 is a catalytic residue. His407 and His413 together coordinate Zn(2+). The 63-residue stretch at 495-557 folds into the Disintegrin domain; that stretch reads GATSRQCKYG…VPFGTWPQSI (63 aa). Residues 558–613 enclose the TSP type-1 1 domain; it reads DGGWGPWSLWGECSRTCGGGVSSSLRHCDSPAPSGGGKYCLGERKRYRSCNTDPCP. The segment at 717-843 is spacer; that stretch reads DAIEGFFNDS…GSGDNEVGFT (127 aa). A glycan (N-linked (GlcNAc...) asparagine) is linked at Asn724. 4 consecutive TSP type-1 domains span residues 840–900, 902–960, 962–1007, and 1018–1073; these read VGFT…EPCP, EWFI…QSCP, QWVA…SKPP, and PPPR…SKCD. Disulfide bonds link Cys911/Cys954, Cys915/Cys959, and Cys926/Cys943. N-linked (GlcNAc...) asparagine glycosylation is present at Asn956. The 39-residue stretch at 1079–1117 folds into the PLAC domain; the sequence is NTEECKDVNKVAYCPLVLKFKFCSRAYFRQMCCKTCQGH.

Zn(2+) is required as a cofactor. The precursor is cleaved by a furin endopeptidase. Post-translationally, glycosylated. Can be O-fucosylated by POFUT2 on a serine or a threonine residue found within the consensus sequence C1-X(2)-(S/T)-C2-G of the TSP type-1 repeat domains where C1 and C2 are the first and second cysteine residue of the repeat, respectively. Fucosylated repeats can then be further glycosylated by the addition of a beta-1,3-glucose residue by the glucosyltransferase, B3GALTL. Fucosylation mediates the efficient secretion of ADAMTS family members. Can also be C-glycosylated with one or two mannose molecules on tryptophan residues within the consensus sequence W-X-X-W of the TPRs, and N-glycosylated. These other glycosylations can also facilitate secretion. As to expression, expressed at low levels in placenta and barely detectable in a number of other tissues.

The protein resides in the secreted. It is found in the extracellular space. The protein localises to the extracellular matrix. The protein is A disintegrin and metalloproteinase with thrombospondin motifs 6 (ADAMTS6) of Homo sapiens (Human).